The primary structure comprises 730 residues: Ribosomal RNA large subunit methyltransferase K/L (730 aa).

Positions 46 to 157 (TAYRLCVWSR…RGEAILSLDL (112 aa)) constitute a THUMP domain. The tract at residues 394-418 (GERREAQPEGTEARQQVPQASEPAR) is disordered.

This sequence belongs to the methyltransferase superfamily. RlmKL family.

The protein localises to the cytoplasm. The enzyme catalyses guanosine(2445) in 23S rRNA + S-adenosyl-L-methionine = N(2)-methylguanosine(2445) in 23S rRNA + S-adenosyl-L-homocysteine + H(+). The catalysed reaction is guanosine(2069) in 23S rRNA + S-adenosyl-L-methionine = N(2)-methylguanosine(2069) in 23S rRNA + S-adenosyl-L-homocysteine + H(+). Its function is as follows. Specifically methylates the guanine in position 2445 (m2G2445) and the guanine in position 2069 (m7G2069) of 23S rRNA. The protein is Ribosomal RNA large subunit methyltransferase K/L of Pseudomonas putida (strain ATCC 47054 / DSM 6125 / CFBP 8728 / NCIMB 11950 / KT2440).